Reading from the N-terminus, the 276-residue chain is Type II pantothenate kinase (276 aa).

Residue 8–15 coordinates ATP; the sequence is DAGGTLTK. The Proton acceptor role is filled by Glu76. ATP contacts are provided by residues Thr105, 127-131, Phe143, and Ser230; that span reads GGTIM.

This sequence belongs to the type II pantothenate kinase family. In terms of assembly, homodimer.

It is found in the cytoplasm. It carries out the reaction (R)-pantothenate + ATP = (R)-4'-phosphopantothenate + ADP + H(+). It participates in cofactor biosynthesis; coenzyme A biosynthesis; CoA from (R)-pantothenate: step 1/5. Catalyzes the phosphorylation of pantothenate (Pan), the first step in CoA biosynthesis. The sequence is that of Type II pantothenate kinase from Bacillus cereus (strain ATCC 10987 / NRS 248).